The following is a 1093-amino-acid chain: Protein AF-17 (1093 aa).

The PHD-type 1 zinc-finger motif lies at 5–57; sequence VGGCCVCSDERGWAENPLVYCDGHACSVAVHQACYGIVQVPTGPWFCRKCESQ. Residues 62 to 95 form a C2HC pre-PHD-type zinc finger; the sequence is RVRCELCPHKDGALKRTDNGGWAHVVCALYIPEV. The PHD-type 2 zinc finger occupies 118–181; that stretch reads KTCYICEEQG…KYCGYCKYHF (64 aa). Residues 185-500 are disordered; sequence KTSRHSSGGG…GGPAAPSLPS (316 aa). Residues 191–212 show a composition bias toward gly residues; the sequence is SGGGGGGAGGGGGSMGGGGSGF. The segment covering 231-255 has biased composition (basic residues); that stretch reads PTHHERGQKKSRKDKERLKQKHKKR. Ser-258 carries the post-translational modification Phosphoserine. Residues 258 to 268 show a composition bias toward pro residues; sequence SPPSILTPPVV. The span at 282–300 shows a compositional bias: basic and acidic residues; that stretch reads SHHEASTQETSESSRESKG. The segment covering 301–316 has biased composition (basic residues); it reads KKSSSHSLSHKGKKLS. The span at 317-340 shows a compositional bias: low complexity; the sequence is SGKGVSSFTSASSSSSSSSSSSGG. The segment covering 345–354 has biased composition (polar residues); sequence AVSSLQSSPD. Positions 374 to 388 are enriched in pro residues; that stretch reads APAPSAPPSPSAPEP. Phosphoserine occurs at positions 378 and 423. The segment covering 410–425 has biased composition (low complexity); it reads STTTSSSGRARAPSPG. Phosphothreonine is present on Thr-451. Basic residues predominate over residues 465–484; the sequence is EKKHKASKRSRHGPGRPKGS. A leucine-zipper region spans residues 729 to 764; the sequence is LQKENQRLQEQILSLTAKKERLQILNVQLSVPFPAL. Disordered regions lie at residues 775–871 and 1060–1093; these read VPGP…RAPG and QTNP…QEKG. The span at 787-796 shows a compositional bias: low complexity; it reads SSDSLSTSKS. A compositionally biased stretch (polar residues) spans 804-813; the sequence is GLDNSLSTSS. Composition is skewed to low complexity over residues 818–832 and 839–853; these read SGCP…SFHS and LLQQ…ALPG.

Interacts with histone H3; interaction is necessary for MLLT6 binding to nucleosomes; interaction is inhibited by histone H3 'Lys-27' methylations (H3K27me1, H3K27me2 and H3K27me3).

It is found in the nucleus. The protein is Protein AF-17 (MLLT6) of Homo sapiens (Human).